The primary structure comprises 873 residues: DNA mismatch repair protein MutS (873 aa).

625-632 is a binding site for ATP; it reads GPNMGGKS.

Belongs to the DNA mismatch repair MutS family.

In terms of biological role, this protein is involved in the repair of mismatches in DNA. It is possible that it carries out the mismatch recognition step. This protein has a weak ATPase activity. In Xanthomonas euvesicatoria pv. vesicatoria (strain 85-10) (Xanthomonas campestris pv. vesicatoria), this protein is DNA mismatch repair protein MutS.